The following is a 344-amino-acid chain: RNA 3'-terminal phosphate cyclase (344 aa).

Residues Q103 and 283–287 contribute to the ATP site; that span reads HLADQ. H308 functions as the Tele-AMP-histidine intermediate in the catalytic mechanism.

The protein belongs to the RNA 3'-terminal cyclase family. Type 1 subfamily.

It localises to the cytoplasm. It carries out the reaction a 3'-end 3'-phospho-ribonucleotide-RNA + ATP = a 3'-end 2',3'-cyclophospho-ribonucleotide-RNA + AMP + diphosphate. Functionally, catalyzes the conversion of 3'-phosphate to a 2',3'-cyclic phosphodiester at the end of RNA. The mechanism of action of the enzyme occurs in 3 steps: (A) adenylation of the enzyme by ATP; (B) transfer of adenylate to an RNA-N3'P to produce RNA-N3'PP5'A; (C) and attack of the adjacent 2'-hydroxyl on the 3'-phosphorus in the diester linkage to produce the cyclic end product. The biological role of this enzyme is unknown but it is likely to function in some aspects of cellular RNA processing. The polypeptide is RNA 3'-terminal phosphate cyclase (Salmonella agona (strain SL483)).